The sequence spans 438 residues: tRNA-2-methylthio-N(6)-dimethylallyladenosine synthase (438 aa).

The MTTase N-terminal domain maps to 3–123 (KRLFVKTYGC…LPEMVAQAAR (121 aa)). The [4Fe-4S] cluster site is built by Cys12, Cys48, Cys86, Cys160, Cys164, and Cys167. The Radical SAM core domain maps to 146–374 (HAEGTSAFLS…QALLLDQTMR (229 aa)). The 62-residue stretch at 377–438 (HACVGREMRI…HPNSLEAVPA (62 aa)) folds into the TRAM domain.

The protein belongs to the methylthiotransferase family. MiaB subfamily. In terms of assembly, monomer. The cofactor is [4Fe-4S] cluster.

The protein localises to the cytoplasm. The catalysed reaction is N(6)-dimethylallyladenosine(37) in tRNA + (sulfur carrier)-SH + AH2 + 2 S-adenosyl-L-methionine = 2-methylsulfanyl-N(6)-dimethylallyladenosine(37) in tRNA + (sulfur carrier)-H + 5'-deoxyadenosine + L-methionine + A + S-adenosyl-L-homocysteine + 2 H(+). Functionally, catalyzes the methylthiolation of N6-(dimethylallyl)adenosine (i(6)A), leading to the formation of 2-methylthio-N6-(dimethylallyl)adenosine (ms(2)i(6)A) at position 37 in tRNAs that read codons beginning with uridine. This is tRNA-2-methylthio-N(6)-dimethylallyladenosine synthase from Paramagnetospirillum magneticum (strain ATCC 700264 / AMB-1) (Magnetospirillum magneticum).